We begin with the raw amino-acid sequence, 366 residues long: Protein FAM131A (366 aa).

A disordered region spans residues 342–366 (QRQASDLASSGVVSLDEDEAEPEEQ). Residues 356–366 (LDEDEAEPEEQ) are compositionally biased toward acidic residues.

It belongs to the FAM131 family.

This chain is Protein FAM131A (FAM131A), found in Homo sapiens (Human).